A 30-amino-acid chain; its full sequence is Cytochrome b6/f complex 12.6 kDa peptide (30 aa).

Positions 1–30 are disordered; it reads SGSGVRSAKKGGKAQGGQAGVGYKGSTEPG. Over residues 13–23 the composition is skewed to gly residues; it reads KAQGGQAGVGY.

The protein localises to the plastid. It is found in the chloroplast. Its function is as follows. May be a component of the cytochrome b6/f complex which is part of the photosynthetic respiratory chain. In Euglena gracilis, this protein is Cytochrome b6/f complex 12.6 kDa peptide.